Here is a 437-residue protein sequence, read N- to C-terminus: Vacuolar cation/proton exchanger 2 (437 aa).

Positions 1-29 (MMGAEKAEGMEELELEEGGGSPSPSPMTA) are disordered. The Cytoplasmic portion of the chain corresponds to 1–65 (MMGAEKAEGM…KWRRALTSVR (65 aa)). A helical transmembrane segment spans residues 66–86 (VVILQAKINVLLPFGPLAVML). The Extracellular segment spans residues 87–88 (HY). The helical transmembrane segment at 89–109 (LSANHQGWVFLFSLIGITPLA) threads the bilayer. The Cytoplasmic segment spans residues 110 to 126 (ERLGYATEQLALYTGPT). Residues 127-147 (IGGLLNATFGNATEMIISLYA) form a helical membrane-spanning segment. Residues 136-171 (GNATEMIISLYALKNGMIRVVQQSLLGSILSNMLLV) form a cation selection region. The Extracellular portion of the chain corresponds to 148 to 161 (LKNGMIRVVQQSLL). The chain crosses the membrane as a helical span at residues 162–182 (GSILSNMLLVLGCAFFAGGLV). The Cytoplasmic segment spans residues 183 to 194 (HPSRDQVFNKAS). Residues 195–215 (AVVNSGLLLMAVLGLMFPAVL) traverse the membrane as a helical segment. Topologically, residues 216-228 (HFTHSEVQYGKSE) are extracellular. Residues 229–249 (VSLSRFSSCIMLVAYASYLFF) form a helical membrane-spanning segment. The Cytoplasmic portion of the chain corresponds to 250–281 (QLKSQRSLYSPIGEQEEEVTEDEEEEKEITQG). A helical transmembrane segment spans residues 282 to 302 (EAICWLFVLTIWISILSGYLV). At 303–310 (DAIQGASE) the chain is on the extracellular side. A helical transmembrane segment spans residues 311-331 (SLNMPVAFISVILLPIVGNAA). The tract at residues 328–363 (GNAAEHASAIMFAMKDKLDITLGVAIGSSTQISMFV) is cation selection. Topologically, residues 332–352 (EHASAIMFAMKDKLDITLGVA) are cytoplasmic. A helical transmembrane segment spans residues 353–373 (IGSSTQISMFVIPFCVVIGWI). The Extracellular segment spans residues 374 to 379 (MGQQMD). The chain crosses the membrane as a helical span at residues 380-400 (LNFQLFETATLFITVLVVAFM). Over 401 to 408 (LQEGTSNY) the chain is Cytoplasmic. A helical transmembrane segment spans residues 409–429 (FKGLMLILCYLIVAASFFVHV). The Extracellular segment spans residues 430 to 437 (DPDSSNNK).

The protein belongs to the Ca(2+):cation antiporter (CaCA) (TC 2.A.19) family. Cation/proton exchanger (CAX) subfamily. As to expression, expressed in roots and shoots.

It localises to the vacuole membrane. In terms of biological role, vacuolar cation/proton exchanger (CAX). Translocates Ca(2+) and other metal ions into vacuoles using the proton gradient formed by H(+)-ATPase and H(+)-pyrophosphatase. The polypeptide is Vacuolar cation/proton exchanger 2 (CAX2) (Oryza sativa subsp. japonica (Rice)).